A 359-amino-acid chain; its full sequence is Peptide chain release factor 1 (359 aa).

Position 235 is an N5-methylglutamine (Gln-235). Residues 283 to 305 (QKAESERSASRKTQVGSGDRSER) form a disordered region.

This sequence belongs to the prokaryotic/mitochondrial release factor family. Methylated by PrmC. Methylation increases the termination efficiency of RF1.

The protein resides in the cytoplasm. Its function is as follows. Peptide chain release factor 1 directs the termination of translation in response to the peptide chain termination codons UAG and UAA. This chain is Peptide chain release factor 1, found in Bartonella bacilliformis (strain ATCC 35685 / KC583 / Herrer 020/F12,63).